We begin with the raw amino-acid sequence, 876 residues long: Leucine--tRNA ligase (876 aa).

A 'HIGH' region motif is present at residues 43–53; the sequence is PYPSGRIHMGH. Residues 632–636 carry the 'KMSKS' region motif; the sequence is KMSKS. Position 635 (Lys635) interacts with ATP.

The protein belongs to the class-I aminoacyl-tRNA synthetase family.

The protein localises to the cytoplasm. The catalysed reaction is tRNA(Leu) + L-leucine + ATP = L-leucyl-tRNA(Leu) + AMP + diphosphate. This Rhodopseudomonas palustris (strain ATCC BAA-98 / CGA009) protein is Leucine--tRNA ligase.